The chain runs to 232 residues: 7-cyano-7-deazaguanine synthase (232 aa).

8-18 (FSGGQDSTTCL) contributes to the ATP binding site. Residues cysteine 189, cysteine 198, cysteine 201, and cysteine 204 each coordinate Zn(2+).

It belongs to the QueC family. Requires Zn(2+) as cofactor.

The enzyme catalyses 7-carboxy-7-deazaguanine + NH4(+) + ATP = 7-cyano-7-deazaguanine + ADP + phosphate + H2O + H(+). It participates in purine metabolism; 7-cyano-7-deazaguanine biosynthesis. In terms of biological role, catalyzes the ATP-dependent conversion of 7-carboxy-7-deazaguanine (CDG) to 7-cyano-7-deazaguanine (preQ(0)). The polypeptide is 7-cyano-7-deazaguanine synthase (Photorhabdus laumondii subsp. laumondii (strain DSM 15139 / CIP 105565 / TT01) (Photorhabdus luminescens subsp. laumondii)).